A 96-amino-acid chain; its full sequence is Glutamyl-tRNA(Gln) amidotransferase subunit C (96 aa).

It belongs to the GatC family. As to quaternary structure, heterotrimer of A, B and C subunits.

The enzyme catalyses L-glutamyl-tRNA(Gln) + L-glutamine + ATP + H2O = L-glutaminyl-tRNA(Gln) + L-glutamate + ADP + phosphate + H(+). The catalysed reaction is L-aspartyl-tRNA(Asn) + L-glutamine + ATP + H2O = L-asparaginyl-tRNA(Asn) + L-glutamate + ADP + phosphate + 2 H(+). Allows the formation of correctly charged Asn-tRNA(Asn) or Gln-tRNA(Gln) through the transamidation of misacylated Asp-tRNA(Asn) or Glu-tRNA(Gln) in organisms which lack either or both of asparaginyl-tRNA or glutaminyl-tRNA synthetases. The reaction takes place in the presence of glutamine and ATP through an activated phospho-Asp-tRNA(Asn) or phospho-Glu-tRNA(Gln). The protein is Glutamyl-tRNA(Gln) amidotransferase subunit C of Nostoc sp. (strain PCC 7120 / SAG 25.82 / UTEX 2576).